Reading from the N-terminus, the 373-residue chain is Putative citrate synthase 2 (373 aa).

Residues His-250 and Glu-303 contribute to the active site.

The protein belongs to the citrate synthase family.

It carries out the reaction oxaloacetate + acetyl-CoA + H2O = citrate + CoA + H(+). Its pathway is carbohydrate metabolism; tricarboxylic acid cycle; isocitrate from oxaloacetate: step 1/2. The protein is Putative citrate synthase 2 (citA) of Mycobacterium bovis (strain ATCC BAA-935 / AF2122/97).